Reading from the N-terminus, the 417-residue chain is UDP-N-acetylglucosamine 1-carboxyvinyltransferase (417 aa).

Residue 22 to 23 (KN) participates in phosphoenolpyruvate binding. Position 92 (Arg92) interacts with UDP-N-acetyl-alpha-D-glucosamine. The active-site Proton donor is Cys116. Cys116 carries the post-translational modification 2-(S-cysteinyl)pyruvic acid O-phosphothioketal. 2 residues coordinate UDP-N-acetyl-alpha-D-glucosamine: Asp304 and Ile326.

This sequence belongs to the EPSP synthase family. MurA subfamily.

Its subcellular location is the cytoplasm. The enzyme catalyses phosphoenolpyruvate + UDP-N-acetyl-alpha-D-glucosamine = UDP-N-acetyl-3-O-(1-carboxyvinyl)-alpha-D-glucosamine + phosphate. Its pathway is cell wall biogenesis; peptidoglycan biosynthesis. In terms of biological role, cell wall formation. Adds enolpyruvyl to UDP-N-acetylglucosamine. This chain is UDP-N-acetylglucosamine 1-carboxyvinyltransferase, found in Geobacter sulfurreducens (strain ATCC 51573 / DSM 12127 / PCA).